A 436-amino-acid polypeptide reads, in one-letter code: GTPase Der (436 aa).

EngA-type G domains lie at 4–167 and 175–351; these read PTIA…PNTS and IKFS…MNQN. GTP is bound by residues 10–17, 57–61, 119–122, 181–188, 229–233, and 294–297; these read GRPNVGKS, DTGGI, NKVD, DTAGM, and NKWD. The 85-residue stretch at 352-436 folds into the KH-like domain; the sequence is LRIPSALLND…PIKIIPRRRK (85 aa).

Belongs to the TRAFAC class TrmE-Era-EngA-EngB-Septin-like GTPase superfamily. EngA (Der) GTPase family. In terms of assembly, associates with the 50S ribosomal subunit.

Functionally, GTPase that plays an essential role in the late steps of ribosome biogenesis. The chain is GTPase Der from Enterococcus faecalis (strain ATCC 700802 / V583).